The chain runs to 551 residues: MNLWQQNYDPAGNIWLSSLIASLPILFFFFALIKLKLKGYVAASWTVAIALAVALLFYKMPVANALASVVYGFFYGLWPIAWIIIAAVFVYKISVKTGQFDIIRSSILSITPDQRLQMLIVGFCFGAFLEGAAGFGAPVAITAALLVGLGFKPLYAAGLCLIVNTAPVAFGAMGIPILVAGQVTGIDSFEIGQMVGRQLPFMTIIVLFWIMAIMDGWRGIKETWPAVVVAGGSFAIAQYLSSNFIGPELPDIISSLVSLLCLTLFLKRWQPVRVFRFGDLGASQVDMTLAHTGYTAGQVLRAWTPFLFLTATVTLWSIPPFKALFASGGALYEWVINIPVPYLDKLVARMPPVVSEATAYAAVFKFDWFSATGTAILFAALLSIVWLKMKPSDAISTFGSTLKELALPIYSIGMVLAFAFISNYSGLSSTLALALAHTGHAFTFFSPFLGWLGVFLTGSDTSSNALFAALQATAAQQIGVSDLLLVAANTTGGVTGKMISPQSIAIACAAVGLVGKESDLFRFTVKHSLIFTCIVGVITTLQAYVLTWMIP.

13 helical membrane passes run 13–33 (NIWL…FALI), 37–57 (LKGY…ALLF), 69–89 (VVYG…AAVF), 131–151 (GAAG…GLGF), 159–179 (LCLI…PILV), 194–214 (MVGR…MAIM), 220–240 (IKET…AQYL), 244–264 (FIGP…CLTL), 366–386 (FDWF…SIVW), 405–425 (LALP…SNYS), 438–458 (TGHA…FLTG), 494–514 (VTGK…VGLV), and 530–550 (IFTC…TWMI).

This sequence belongs to the lactate permease family.

It localises to the cell inner membrane. The enzyme catalyses (S)-lactate(in) + H(+)(in) = (S)-lactate(out) + H(+)(out). It catalyses the reaction (R)-lactate(in) + H(+)(in) = (R)-lactate(out) + H(+)(out). The catalysed reaction is glycolate(in) + H(+)(in) = glycolate(out) + H(+)(out). Inhibited by the proton ionophore carbonyl cyanide m-chlorophenylhydrazone (CCCP). In terms of biological role, uptake of L-lactate across the membrane. Can also transport D-lactate and glycolate. Seems to be driven by a proton motive force. In Escherichia coli (strain K12), this protein is L-lactate permease.